The chain runs to 312 residues: Malate dehydrogenase 1 (312 aa).

NAD(+) contacts are provided by residues Gly-11–Gly-16 and Asp-35. Substrate is bound by residues Arg-86 and Arg-92. Residues Asn-99 and Ile-122–Asn-124 contribute to the NAD(+) site. 2 residues coordinate substrate: Asn-124 and Arg-155. His-179 (proton acceptor) is an active-site residue.

The protein belongs to the LDH/MDH superfamily. MDH type 3 family.

It catalyses the reaction (S)-malate + NAD(+) = oxaloacetate + NADH + H(+). In terms of biological role, catalyzes the reversible oxidation of malate to oxaloacetate. This Anaeromyxobacter dehalogenans (strain 2CP-C) protein is Malate dehydrogenase 1.